A 444-amino-acid polypeptide reads, in one-letter code: Phosphoglucosamine mutase (444 aa).

S102 serves as the catalytic Phosphoserine intermediate. The Mg(2+) site is built by S102, D241, D243, and D245. At S102 the chain carries Phosphoserine.

This sequence belongs to the phosphohexose mutase family. It depends on Mg(2+) as a cofactor. In terms of processing, activated by phosphorylation.

The enzyme catalyses alpha-D-glucosamine 1-phosphate = D-glucosamine 6-phosphate. Catalyzes the conversion of glucosamine-6-phosphate to glucosamine-1-phosphate. This Actinobacillus succinogenes (strain ATCC 55618 / DSM 22257 / CCUG 43843 / 130Z) protein is Phosphoglucosamine mutase.